A 284-amino-acid polypeptide reads, in one-letter code: 2-dehydro-3-deoxyphosphooctonate aldolase (284 aa).

The protein belongs to the KdsA family.

The protein localises to the cytoplasm. It catalyses the reaction D-arabinose 5-phosphate + phosphoenolpyruvate + H2O = 3-deoxy-alpha-D-manno-2-octulosonate-8-phosphate + phosphate. It functions in the pathway carbohydrate biosynthesis; 3-deoxy-D-manno-octulosonate biosynthesis; 3-deoxy-D-manno-octulosonate from D-ribulose 5-phosphate: step 2/3. The protein operates within bacterial outer membrane biogenesis; lipopolysaccharide biosynthesis. The protein is 2-dehydro-3-deoxyphosphooctonate aldolase of Erwinia tasmaniensis (strain DSM 17950 / CFBP 7177 / CIP 109463 / NCPPB 4357 / Et1/99).